We begin with the raw amino-acid sequence, 437 residues long: Repulsive guidance molecule B (437 aa).

Residues 1–45 (MGLRAAPSSAAAAAAEVEQRRSPGLCPPPLELLLLLLFSLGLLHA) form the signal peptide. N120 carries an N-linked (GlcNAc...) asparagine glycan. Residues 121-133 (CSKDGPTSSTNPE) are compositionally biased toward polar residues. The interval 121-153 (CSKDGPTSSTNPEVTHDPCNYHSHAGAREHRRG) is disordered. 2 disulfide bridges follow: C139–C226 and C163–C312. A glycan (N-linked (GlcNAc...) asparagine) is linked at N383. The GPI-anchor amidated asparagine moiety is linked to residue N413. The propeptide at 414–437 (GTPRGGSDLSVSLGLTCLILIVFL) is removed in mature form.

It belongs to the repulsive guidance molecule (RGM) family. As to quaternary structure, homooligomer. Interacts with DRGX. Interacts with BMP2 and BMP4. Interacts with the BMP type I receptors ACVR1, BMPR1A and BMPR1B and with the BMP type II receptor ACVR2B. The functional complex with its receptor NEO1/neogenin appears to be a heterotetramer with a 2:2 stoichiometry, RGM molecules acting as staples that bring two NEO1 receptors together without interacting themselves, this arrangement leads to activation of downstream signaling via RhoA. In terms of processing, GPI-anchored. Post-translationally, autocatalytically cleaved at low pH; the two chains remain linked via two disulfide bonds.

It localises to the cell membrane. The protein resides in the membrane raft. Member of the repulsive guidance molecule (RGM) family that contributes to the patterning of the developing nervous system. Acts as a bone morphogenetic protein (BMP) coreceptor that potentiates BMP signaling. Promotes neuronal adhesion. May inhibit neurite outgrowth. In Homo sapiens (Human), this protein is Repulsive guidance molecule B.